A 174-amino-acid polypeptide reads, in one-letter code: Co-chaperone protein HscB homolog (174 aa).

One can recognise a J domain in the interval 2-74; it reads NYFELFKFSP…IRRAEHMLSL (73 aa).

Belongs to the HscB family. As to quaternary structure, interacts with HscA and stimulates its ATPase activity.

Functionally, co-chaperone involved in the maturation of iron-sulfur cluster-containing proteins. Seems to help targeting proteins to be folded toward HscA. The chain is Co-chaperone protein HscB homolog from Shewanella sp. (strain MR-4).